The chain runs to 59 residues: Large ribosomal subunit protein bL32c (59 aa).

The interval S37–K59 is disordered.

It belongs to the bacterial ribosomal protein bL32 family.

It is found in the plastid. It localises to the chloroplast. The protein is Large ribosomal subunit protein bL32c (rpl32) of Zea mays (Maize).